The chain runs to 248 residues: Probable transcriptional regulatory protein Ccel_0181 (248 aa).

It belongs to the TACO1 family.

The protein localises to the cytoplasm. The protein is Probable transcriptional regulatory protein Ccel_0181 of Ruminiclostridium cellulolyticum (strain ATCC 35319 / DSM 5812 / JCM 6584 / H10) (Clostridium cellulolyticum).